Reading from the N-terminus, the 187-residue chain is Major allergen Equ c 1 (187 aa).

A signal peptide (or 16, or 21) is located at residues 1–15; that stretch reads MKLLLLCLGLILVCA. N53 and N68 each carry an N-linked (GlcNAc...) asparagine glycan. Residues C83 and C176 are joined by a disulfide bond.

This sequence belongs to the calycin superfamily. Lipocalin family. As to quaternary structure, homodimer. Post-translationally, several N-terminal ends may be due to cleavage by signal peptidase at different sites or may be generated by proteolytic processing of the secreted protein. In terms of processing, analysis of the sugar composition shows the presence of GalNAc, Gal, NeuAc, GlcNAc, and Man. May be also O-glycosylated. As to expression, expressed in liver and in sublingual and submaxillary salivary glands. Highly concentrated in secretory fluid such as saliva and urine as well as in hair dandruff extract.

The protein localises to the secreted. The sequence is that of Major allergen Equ c 1 from Equus caballus (Horse).